The following is a 911-amino-acid chain: ATP-dependent DNA helicase Q-like 5 (911 aa).

The tract at residues 1–84 is disordered; that stretch reads MDFDSDSDGS…PPPSPLFTNL (84 aa). Over residues 20 to 48 the composition is skewed to low complexity; it reads SFPSSPPQLQSPAKHVPPVSRKMTSSSSR. A compositionally biased stretch (pro residues) spans 54-79; that stretch reads PTHPPPNPSQEAPVPSPYPPPPPPSP. A Helicase ATP-binding domain is found at 278 to 448; the sequence is IKMILGGSST…MSSLEIPSTN (171 aa). 291-298 lines the ATP pocket; sequence LPTGAGKS. The short motif at 390 to 393 is the DEAH box element; it reads DEAH. One can recognise a Helicase C-terminal domain in the interval 470–628; that stretch reads RMKDLLILME…VFSTETKQHE (159 aa).

Belongs to the helicase family. RecQ subfamily. Mostly expressed in roots, seedlings, shoots, shoot apical mersitem, flowers, and siliques.

The protein resides in the nucleus. It carries out the reaction Couples ATP hydrolysis with the unwinding of duplex DNA by translocating in the 3'-5' direction.. It catalyses the reaction ATP + H2O = ADP + phosphate + H(+). 3'-5' DNA helicase that may play a role in the repair of DNA. In Arabidopsis thaliana (Mouse-ear cress), this protein is ATP-dependent DNA helicase Q-like 5 (RECQL5).